The sequence spans 474 residues: Aromatic amino acid aminotransferase C56E4.03 (474 aa).

It belongs to the class-I pyridoxal-phosphate-dependent aminotransferase family. Pyridoxal 5'-phosphate serves as cofactor.

The protein localises to the cytoplasm. It carries out the reaction an aromatic L-alpha-amino acid + 2-oxoglutarate = an aromatic oxo-acid + L-glutamate. Has aromatic amino acid transaminase activity. This Schizosaccharomyces pombe (strain 972 / ATCC 24843) (Fission yeast) protein is Aromatic amino acid aminotransferase C56E4.03.